Here is a 1321-residue protein sequence, read N- to C-terminus: Insulin receptor substrate 2 (1321 aa).

Over residues 1–10 (MASAPLPGPP) the composition is skewed to pro residues. 2 disordered regions span residues 1-32 (MASAPLPGPPASAGGDGPNLNNNNNNNNHSVR) and 51-73 (RGPGTGGDEASAAGGSPPQPPRL). The 129-residue stretch at 16 to 144 (DGPNLNNNNN…WYRALTDLVS (129 aa)) folds into the PH domain. A compositionally biased stretch (low complexity) spans 18-28 (PNLNNNNNNNN). The 105-residue stretch at 191-295 (YREVWQVNLK…EAMKALKELF (105 aa)) folds into the IRS-type PTB domain. Residues 299 to 536 (PRSKSQSSGS…ARDGSGGELY (238 aa)) form a disordered region. Ser-303 and Ser-343 each carry phosphoserine. Position 347 is a phosphothreonine (Thr-347). Ser-362 carries the phosphoserine modification. Over residues 364–376 (GDGGAAGGAGTAG) the composition is skewed to gly residues. Phosphoserine occurs at positions 381, 385, and 388. Arg-409 bears the Omega-N-methylarginine mark. 2 stretches are compositionally biased toward low complexity: residues 435–456 (SPPAATSPGSLSSSSGHGSGSY) and 478–490 (PSSGSASASGSPS). Residue Thr-517 is modified to Phosphothreonine. At Ser-520 the chain carries Phosphoserine. Residue Thr-524 is modified to Phosphothreonine. The residue at position 536 (Tyr-536) is a Phosphotyrosine; by INSR. The YXXM motif 1 motif lies at 536 to 539 (YGYM). Residue Ser-556 is modified to Phosphoserine; by PLK1. Position 573 is a phosphoserine (Ser-573). Thr-575 and Thr-576 each carry phosphothreonine. Position 590 is a phosphoserine (Ser-590). Residues 594-597 (YTLM) carry the YXXM motif 2 motif. Phosphoserine is present on residues Ser-604 and Ser-616. At Tyr-649 the chain carries Phosphotyrosine. 2 consecutive short sequence motifs (YXXM motif) follow at residues 649-652 (YMPM) and 671-674 (YMPM). Tyr-671 is subject to Phosphotyrosine; by INSR. A phosphoserine mark is found at Ser-675, Ser-678, Ser-727, and Ser-728. A YXXM motif 5 motif is present at residues 734-737 (YMRM). A Phosphoserine modification is found at Ser-762. Thr-771 is subject to Phosphothreonine. Residue Ser-796 is modified to Phosphoserine. Positions 814–817 (YVLM) match the YXXM motif 6 motif. Ser-819 carries the phosphoserine modification. Disordered regions lie at residues 834 to 871 (ATPGAGTFGAAGGSHTQPHHSAVPSSMRPSAIGGRPEG) and 888 to 1091 (EGLQ…ASPT). Phosphoserine is present on Ser-907. Tyr-911 carries the post-translational modification Phosphotyrosine; by INSR. Residues 930 to 959 (LLASAASSSSLLSASSPASSLGSGTPGTSS) are compositionally biased toward low complexity. Phosphoserine is present on Ser-965. Tyr-970 is modified (phosphotyrosine; by INSR). The segment covering 1005 to 1014 (PYPPLPPRPS) has biased composition (pro residues). The span at 1039 to 1055 (AATSQGPTAGSSMSSEP) shows a compositional bias: polar residues. The YXXM motif 7 motif lies at 1061–1064 (YTEM). Thr-1071 bears the Phosphothreonine mark. A compositionally biased stretch (pro residues) spans 1072-1082 (PPQPIVAPPKP). Phosphoserine is present on Ser-1089. At Ser-1098 the chain carries Phosphoserine; by PLK1. The interval 1110–1198 (LQVSQPPDPH…TSPGQAQPLV (89 aa)) is disordered. Positions 1139–1154 (ETFSSTTTVTPVSPSF) are enriched in low complexity. Thr-1148 carries the post-translational modification Phosphothreonine. Residues Ser-1151, Ser-1163, Ser-1165, Ser-1175, and Ser-1190 each carry the phosphoserine modification. Residues 1163 to 1179 (SASVENVSLRKSSEGSS) are compositionally biased toward polar residues. A Phosphotyrosine; by INSR modification is found at Tyr-1242. The interval 1251–1275 (QGSLAQSQPQPGDKNSWSRTRSLGG) is disordered. A compositionally biased stretch (polar residues) spans 1253–1271 (SLAQSQPQPGDKNSWSRTR). A Phosphotyrosine; by INSR modification is found at Tyr-1303. Lys-1314 is covalently cross-linked (Glycyl lysine isopeptide (Lys-Gly) (interchain with G-Cter in ubiquitin)).

As to quaternary structure, interacts with PHIP. Interacts with SH2B1; this interaction enhances leptin-induced activation of the PI3-kinase pathway. Interacts with GRB2. Interacts with PIK3R1. Interacts with DVL2; this interaction promotes the Wnt/beta-catenin signaling pathway. Post-translationally, phosphorylation fluctuates in a cell-cycle dependent manner with hyperphosphorylation during mitosis. Phosphorylated at Ser-556 and Ser-1098 by PLK1; these phosphorylations prevent the activation of the PI3K pathway upon growth factor stimulation by inhibiting the binding between IRS2 and the PI3K pathway components and increasing the level of IRS2 protein degradation. In addition, they prevent premature mitotic exit. In terms of processing, monoubiquitinated by NEDD4; leading to enhanced IGF1 signaling. During cell cycle, ubiquitination and proteasomal degradation are controlled by FZR1. Skeletal muscle, lung, brain, liver, kidney, heart and spleen.

It localises to the cytoplasm. The protein localises to the cytosol. In terms of biological role, signaling adapter protein that participates in the signal transduction from two prominent receptor tyrosine kinases, insulin receptor/INSR and insulin-like growth factor I receptor/IGF1R. Plays therefore an important role in development, growth, glucose homeostasis as well as lipid metabolism. Upon phosphorylation by the insulin receptor, functions as a signaling scaffold that propagates insulin action through binding to SH2 domain-containing proteins including the p85 regulatory subunit of PI3K, NCK1, NCK2, GRB2 or SHP2. Recruitment of GRB2 leads to the activation of the guanine nucleotide exchange factor SOS1 which in turn triggers the Ras/Raf/MEK/MAPK signaling cascade. Activation of the PI3K/AKT pathway is responsible for most of insulin metabolic effects in the cell, and the Ras/Raf/MEK/MAPK is involved in the regulation of gene expression and in cooperation with the PI3K pathway regulates cell growth and differentiation. Acts a positive regulator of the Wnt/beta-catenin signaling pathway through suppression of DVL2 autophagy-mediated degradation leading to cell proliferation. Plays a role in cell cycle progression by promoting a robust spindle assembly checkpoint (SAC) during M-phase. In macrophages, IL4-induced tyrosine phosphorylation of IRS2 leads to the recruitment and activation of phosphoinositide 3-kinase (PI3K). The chain is Insulin receptor substrate 2 (Irs2) from Mus musculus (Mouse).